A 237-amino-acid polypeptide reads, in one-letter code: Leucyl/phenylalanyl-tRNA--protein transferase (237 aa).

The protein belongs to the L/F-transferase family.

The protein resides in the cytoplasm. It catalyses the reaction N-terminal L-lysyl-[protein] + L-leucyl-tRNA(Leu) = N-terminal L-leucyl-L-lysyl-[protein] + tRNA(Leu) + H(+). The enzyme catalyses N-terminal L-arginyl-[protein] + L-leucyl-tRNA(Leu) = N-terminal L-leucyl-L-arginyl-[protein] + tRNA(Leu) + H(+). It carries out the reaction L-phenylalanyl-tRNA(Phe) + an N-terminal L-alpha-aminoacyl-[protein] = an N-terminal L-phenylalanyl-L-alpha-aminoacyl-[protein] + tRNA(Phe). Its function is as follows. Functions in the N-end rule pathway of protein degradation where it conjugates Leu, Phe and, less efficiently, Met from aminoacyl-tRNAs to the N-termini of proteins containing an N-terminal arginine or lysine. This is Leucyl/phenylalanyl-tRNA--protein transferase from Shewanella baltica (strain OS195).